The sequence spans 363 residues: Serpentine receptor class T-55 (363 aa).

The first 18 residues, 1–18 (MKLRHFLIFLMLIPISSS), serve as a signal peptide directing secretion. A run of 7 helical transmembrane segments spans residues 70 to 90 (IYYI…IWVF), 107 to 127 (VFIG…PGFV), 143 to 163 (IVGK…AFLG), 187 to 207 (WLTV…TVLF), 231 to 251 (FLYF…ACLC), 278 to 298 (ICIS…FVLP), and 303 to 323 (FFHV…IMYI).

This sequence belongs to the nematode receptor-like protein srt family.

It is found in the membrane. The sequence is that of Serpentine receptor class T-55 (srt-55) from Caenorhabditis elegans.